A 225-amino-acid chain; its full sequence is Urease accessory protein UreG 2 (225 aa).

Residue 31-38 (GPVGSGKT) participates in GTP binding.

It belongs to the SIMIBI class G3E GTPase family. UreG subfamily. Homodimer. UreD, UreF and UreG form a complex that acts as a GTP-hydrolysis-dependent molecular chaperone, activating the urease apoprotein by helping to assemble the nickel containing metallocenter of UreC. The UreE protein probably delivers the nickel.

The protein resides in the cytoplasm. Facilitates the functional incorporation of the urease nickel metallocenter. This process requires GTP hydrolysis, probably effectuated by UreG. This is Urease accessory protein UreG 2 from Streptomyces griseus subsp. griseus (strain JCM 4626 / CBS 651.72 / NBRC 13350 / KCC S-0626 / ISP 5235).